Consider the following 623-residue polypeptide: Glutathione import ATP-binding protein GsiA (623 aa).

2 ABC transporter domains span residues 15–269 (VENL…RALL) and 314–564 (LRVR…RKLL). ATP contacts are provided by residues 49 to 56 (GESGSGKS) and 357 to 364 (GESGSGKS).

This sequence belongs to the ABC transporter superfamily. Glutathione importer (TC 3.A.1.5.11) family. In terms of assembly, the complex is composed of two ATP-binding proteins (GsiA), two transmembrane proteins (GsiC and GsiD) and a solute-binding protein (GsiB).

The protein localises to the cell inner membrane. The catalysed reaction is glutathione(out) + ATP + H2O = glutathione(in) + ADP + phosphate + H(+). Part of the ABC transporter complex GsiABCD involved in glutathione import. Responsible for energy coupling to the transport system. The sequence is that of Glutathione import ATP-binding protein GsiA from Escherichia coli O1:K1 / APEC.